We begin with the raw amino-acid sequence, 200 residues long: NADH-quinone oxidoreductase subunit C 1 (200 aa).

The protein belongs to the complex I 30 kDa subunit family. As to quaternary structure, NDH-1 is composed of 14 different subunits. Subunits NuoB, C, D, E, F, and G constitute the peripheral sector of the complex.

The protein localises to the cell inner membrane. It catalyses the reaction a quinone + NADH + 5 H(+)(in) = a quinol + NAD(+) + 4 H(+)(out). NDH-1 shuttles electrons from NADH, via FMN and iron-sulfur (Fe-S) centers, to quinones in the respiratory chain. The immediate electron acceptor for the enzyme in this species is believed to be ubiquinone. Couples the redox reaction to proton translocation (for every two electrons transferred, four hydrogen ions are translocated across the cytoplasmic membrane), and thus conserves the redox energy in a proton gradient. The chain is NADH-quinone oxidoreductase subunit C 1 from Rhizobium etli (strain CIAT 652).